We begin with the raw amino-acid sequence, 446 residues long: Nuclear envelope morphology protein 1 (446 aa).

A disordered region spans residues 53-80 (VDQQYDHSSSHLKESDQNQERKNSVPKK). A compositionally biased stretch (basic and acidic residues) spans 56 to 75 (QYDHSSSHLKESDQNQERKN). Residues 87 to 103 (ILIEKIASILWALLLFL) traverse the membrane as a helical segment. Residues 132 to 168 (HTDKRNRGSNASENELPVSSSNINDSSEKTNPKNCNL) are disordered. Over residues 139-156 (GSNASENELPVSSSNIND) the composition is skewed to polar residues. In terms of domain architecture, FCP1 homology spans 247–424 (NTQKKKKLVI…LNLLPFLEAM (178 aa)).

It belongs to the Dullard family. In terms of assembly, component of the NEM1-SPO7 complex.

The protein resides in the endoplasmic reticulum membrane. Its subcellular location is the nucleus membrane. The catalysed reaction is O-phospho-L-seryl-[protein] + H2O = L-seryl-[protein] + phosphate. It carries out the reaction O-phospho-L-threonyl-[protein] + H2O = L-threonyl-[protein] + phosphate. In terms of biological role, catalytic component of the NEM1-SPO7 complex which acts as a phosphatase and dephosphorylates the phosphatidic acid phosphohydrolase PAH1. Essential for the formation of a spherical nucleus and meiotic division. The NEM1-SPOo7 protein phosphatase is required for efficient mitophagy under prolonged respiration, as well as for reticulophagy and pexophagy. The polypeptide is Nuclear envelope morphology protein 1 (NEM1) (Saccharomyces cerevisiae (strain ATCC 204508 / S288c) (Baker's yeast)).